The sequence spans 123 residues: Small ribosomal subunit protein uS12 (123 aa).

D89 bears the 3-methylthioaspartic acid mark.

Belongs to the universal ribosomal protein uS12 family. As to quaternary structure, part of the 30S ribosomal subunit. Contacts proteins S8 and S17. May interact with IF1 in the 30S initiation complex.

Functionally, with S4 and S5 plays an important role in translational accuracy. Its function is as follows. Interacts with and stabilizes bases of the 16S rRNA that are involved in tRNA selection in the A site and with the mRNA backbone. Located at the interface of the 30S and 50S subunits, it traverses the body of the 30S subunit contacting proteins on the other side and probably holding the rRNA structure together. The combined cluster of proteins S8, S12 and S17 appears to hold together the shoulder and platform of the 30S subunit. This Citrifermentans bemidjiense (strain ATCC BAA-1014 / DSM 16622 / JCM 12645 / Bem) (Geobacter bemidjiensis) protein is Small ribosomal subunit protein uS12.